A 333-amino-acid chain; its full sequence is Probable tRNA pseudouridine synthase B (333 aa).

The span at 1-14 (MKCPSREVFSKFEE) shows a compositional bias: basic and acidic residues. The segment at 1–27 (MKCPSREVFSKFEESTNPQWGKPPSQR) is disordered. Asp-71 functions as the Nucleophile in the catalytic mechanism. The 76-residue stretch at 238–313 (LPKIWVRDSA…LVARTDRVVM (76 aa)) folds into the PUA domain.

The protein belongs to the pseudouridine synthase TruB family. Type 2 subfamily.

It carries out the reaction uridine(55) in tRNA = pseudouridine(55) in tRNA. Functionally, could be responsible for synthesis of pseudouridine from uracil-55 in the psi GC loop of transfer RNAs. This chain is Probable tRNA pseudouridine synthase B, found in Pyrobaculum aerophilum (strain ATCC 51768 / DSM 7523 / JCM 9630 / CIP 104966 / NBRC 100827 / IM2).